The following is an 83-amino-acid chain: Small ribosomal subunit protein bS16 (83 aa).

This sequence belongs to the bacterial ribosomal protein bS16 family.

The protein is Small ribosomal subunit protein bS16 of Shewanella putrefaciens (strain CN-32 / ATCC BAA-453).